Reading from the N-terminus, the 377-residue chain is Nitric oxide reductase FlRd-NAD(+) reductase (377 aa).

This sequence belongs to the FAD-dependent oxidoreductase family. FAD serves as cofactor.

The protein resides in the cytoplasm. The catalysed reaction is 2 reduced [nitric oxide reductase rubredoxin domain] + NAD(+) + H(+) = 2 oxidized [nitric oxide reductase rubredoxin domain] + NADH. It participates in nitrogen metabolism; nitric oxide reduction. Functionally, one of at least two accessory proteins for anaerobic nitric oxide (NO) reductase. Reduces the rubredoxin moiety of NO reductase. In Salmonella paratyphi A (strain AKU_12601), this protein is Nitric oxide reductase FlRd-NAD(+) reductase.